The chain runs to 557 residues: Hemolysin transporter protein ShlB (557 aa).

A signal peptide spans 1–18; that stretch reads MIKKITALTLLVSTALSA. The region spanning 79 to 152 is the POTRA domain; that stretch reads LPIAGVYLQG…GELGLSVTEG (74 aa).

The protein belongs to the TPS (TC 1.B.20) family.

The protein resides in the cell outer membrane. In terms of biological role, interacts with the cell-bound hemolysin. Necessary for the extracellular secretion and activation of hemolysin. Functionally, member of a two partner secretion pathway (TPS) in which it mediates the secretion of hemolysin. The chain is Hemolysin transporter protein ShlB (shlB) from Serratia marcescens.